Reading from the N-terminus, the 283-residue chain is Bifunctional protein FolD (283 aa).

NADP(+) is bound by residues 165 to 167 (GRS) and S190.

This sequence belongs to the tetrahydrofolate dehydrogenase/cyclohydrolase family. In terms of assembly, homodimer.

The catalysed reaction is (6R)-5,10-methylene-5,6,7,8-tetrahydrofolate + NADP(+) = (6R)-5,10-methenyltetrahydrofolate + NADPH. It carries out the reaction (6R)-5,10-methenyltetrahydrofolate + H2O = (6R)-10-formyltetrahydrofolate + H(+). It functions in the pathway one-carbon metabolism; tetrahydrofolate interconversion. Its function is as follows. Catalyzes the oxidation of 5,10-methylenetetrahydrofolate to 5,10-methenyltetrahydrofolate and then the hydrolysis of 5,10-methenyltetrahydrofolate to 10-formyltetrahydrofolate. The chain is Bifunctional protein FolD from Variovorax paradoxus (strain S110).